Here is a 190-residue protein sequence, read N- to C-terminus: dCTP deaminase, dUMP-forming (190 aa).

DCTP is bound by residues 101–106 (KSSLGR), D119, 127–129 (TLE), Q148, Y162, and Q174. The active-site Proton donor/acceptor is the E129. Positions 163 to 190 (GSTRVGSKYQGQRGPTPSRSYQNFITST) are disordered. Over residues 171–190 (YQGQRGPTPSRSYQNFITST) the composition is skewed to polar residues.

The protein belongs to the dCTP deaminase family. In terms of assembly, homotrimer.

It catalyses the reaction dCTP + 2 H2O = dUMP + NH4(+) + diphosphate. It participates in pyrimidine metabolism; dUMP biosynthesis; dUMP from dCTP: step 1/1. Bifunctional enzyme that catalyzes both the deamination of dCTP to dUTP and the hydrolysis of dUTP to dUMP without releasing the toxic dUTP intermediate. This chain is dCTP deaminase, dUMP-forming, found in Mycobacterium avium (strain 104).